The following is a 327-amino-acid chain: Putative D-threonate 4-phosphate dehydrogenase (327 aa).

Residues histidine 139 and threonine 140 each coordinate substrate. The a divalent metal cation site is built by histidine 169, histidine 213, and histidine 268. Substrate contacts are provided by lysine 276, asparagine 285, and arginine 294.

Belongs to the PdxA family. PdxA2 subfamily. In terms of assembly, homodimer. It depends on a divalent metal cation as a cofactor.

The catalysed reaction is 4-O-phospho-D-threonate + NAD(+) = dihydroxyacetone phosphate + CO2 + NADH. Functionally, catalyzes the NAD-dependent oxidation and subsequent decarboxylation of D-threonate 4-phosphate to produce dihydroxyacetone phosphate (DHAP). This Salmonella typhi protein is Putative D-threonate 4-phosphate dehydrogenase.